The chain runs to 226 residues: PKHD-type hydroxylase MADE_1018490 (226 aa).

The region spanning 77–177 (RIFPPCFNRY…RIAAITWIQS (101 aa)) is the Fe2OG dioxygenase domain. Positions 95, 97, and 158 each coordinate Fe cation. Residue Arg168 participates in 2-oxoglutarate binding.

It depends on Fe(2+) as a cofactor. L-ascorbate serves as cofactor.

This is PKHD-type hydroxylase MADE_1018490 from Alteromonas mediterranea (strain DSM 17117 / CIP 110805 / LMG 28347 / Deep ecotype).